A 154-amino-acid chain; its full sequence is uncharacterized protein (154 aa).

This is an uncharacterized protein from Schizosaccharomyces pombe (strain 972 / ATCC 24843) (Fission yeast).